We begin with the raw amino-acid sequence, 511 residues long: 2,3-bisphosphoglycerate-independent phosphoglycerate mutase (511 aa).

Residues Asp12 and Ser62 each coordinate Mn(2+). The Phosphoserine intermediate role is filled by Ser62. Substrate contacts are provided by residues His123, 153–154 (RD), Arg185, Arg191, 260–263 (RPDR), and Lys335. Positions 402, 406, 443, 444, and 462 each coordinate Mn(2+).

The protein belongs to the BPG-independent phosphoglycerate mutase family. In terms of assembly, monomer. It depends on Mn(2+) as a cofactor.

The catalysed reaction is (2R)-2-phosphoglycerate = (2R)-3-phosphoglycerate. The protein operates within carbohydrate degradation; glycolysis; pyruvate from D-glyceraldehyde 3-phosphate: step 3/5. Catalyzes the interconversion of 2-phosphoglycerate and 3-phosphoglycerate. The chain is 2,3-bisphosphoglycerate-independent phosphoglycerate mutase from Acetivibrio thermocellus (strain ATCC 27405 / DSM 1237 / JCM 9322 / NBRC 103400 / NCIMB 10682 / NRRL B-4536 / VPI 7372) (Clostridium thermocellum).